The primary structure comprises 235 residues: Serine/arginine-rich splicing factor 7 (235 aa).

The region spanning 11–84 (TKVYVGNLGT…SRVRVELSTG (74 aa)) is the RRM domain. Lys-24 carries the N6-acetyllysine; alternate modification. Lys-24 is covalently cross-linked (Glycyl lysine isopeptide (Lys-Gly) (interchain with G-Cter in SUMO2); alternate). A Phosphoserine modification is found at Ser-32. The tract at residues 81-98 (LSTGMPRRSRFDRPPARR) is sufficient for interaction with NXF1. Residues 104-120 (DRCYECGEKGHYAYDCH) form a CCHC-type zinc finger. Positions 123 to 180 (SRRRRSRSRSRSHSRSRGRRYSRSRSRSRGRRSRSASPRRSRSVSLRRSRSASLRRSR) are enriched in basic residues. The interval 123 to 235 (SRRRRSRSRS…RRSASPERVD (113 aa)) is disordered. 4 consecutive repeat copies span residues 153-160 (RRSRSASP), 161-168 (RRSRSVSL), 169-176 (RRSRSASL), and 177-184 (RRSRSGSI). The interval 153-223 (RRSRSASPRR…SPKRSRSPSG (71 aa)) is 6 X 8 AA repeats of R-R-S-R-S-X-S-X. Phosphoserine occurs at positions 163, 165, and 167. Ser-181, Ser-183, Ser-189, Ser-191, and Ser-193 each carry phosphoserine. Basic residues predominate over residues 187 to 219 (SRSRSRSRSRSRSLSRPRSSRSKSRSPSPKRSR). The stretch at 208–215 (SKSRSPSP) is one 5; approximate repeat. The 6; approximate repeat unit spans residues 216-223 (KRSRSPSG). A phosphoserine mark is found at Ser-228 and Ser-230.

The protein belongs to the splicing factor SR family. As to quaternary structure, found in large molecular weight complexes containing CCNL1 and the p110 isoforms of either CDC2L1 or CDC2L2. Interacts with CCNL2 and CPSF6. Interacts with NXF1. Interacts with YTHDC1. Extensively phosphorylated on serine residues in the RS domain.

It localises to the nucleus. It is found in the cytoplasm. Required for pre-mRNA splicing. Represses the splicing of MAPT/Tau exon 10. May function as export adapter involved in mRNA nuclear export such as of histone H2A. Binds mRNA which is thought to be transferred to the NXF1-NXT1 heterodimer for export (TAP/NXF1 pathway); enhances NXF1-NXT1 RNA-binding activity. RNA-binding is semi-sequence specific. This Bos taurus (Bovine) protein is Serine/arginine-rich splicing factor 7 (SRSF7).